A 568-amino-acid chain; its full sequence is Urease subunit alpha (568 aa).

Residues 131–568 (GGMDAHIHFI…LPLAQRYFLY (438 aa)) enclose the Urease domain. Ni(2+) is bound by residues H136, H138, and K219. K219 carries the N6-carboxylysine modification. H221 lines the substrate pocket. Residues H248 and H274 each contribute to the Ni(2+) site. H322 (proton donor) is an active-site residue. D362 serves as a coordination point for Ni(2+).

It belongs to the metallo-dependent hydrolases superfamily. Urease alpha subunit family. In terms of assembly, heterotrimer of UreA (gamma), UreB (beta) and UreC (alpha) subunits. Three heterotrimers associate to form the active enzyme. Ni cation serves as cofactor. Post-translationally, carboxylation allows a single lysine to coordinate two nickel ions.

The protein localises to the cytoplasm. The catalysed reaction is urea + 2 H2O + H(+) = hydrogencarbonate + 2 NH4(+). It participates in nitrogen metabolism; urea degradation; CO(2) and NH(3) from urea (urease route): step 1/1. The polypeptide is Urease subunit alpha (Cereibacter sphaeroides (strain ATCC 17023 / DSM 158 / JCM 6121 / CCUG 31486 / LMG 2827 / NBRC 12203 / NCIMB 8253 / ATH 2.4.1.) (Rhodobacter sphaeroides)).